We begin with the raw amino-acid sequence, 131 residues long: Mesogenin-1 (131 aa).

The interval 22–79 (EDRSFGDSASSPESESFDSACSSPDARSSPTAGCEHAEQQKPKVKMSMRRRMKASERE) is disordered. Over residues 27-45 (GDSASSPESESFDSACSSP) the composition is skewed to low complexity. A compositionally biased stretch (basic residues) spans 63-73 (PKVKMSMRRRM). The bHLH domain occupies 70–124 (RRRMKASEREKLRMRSLAEALHQLRDYLPPGYSRRGQPLTKIQTLKYTIQYIKEL).

As to expression, coexpression of ntl and spt is required for expression.

The protein localises to the nucleus. Its function is as follows. Involved in specifying the paraxial, but not dorsal, mesoderm. May regulate the expression of T-box transcription factors required for mesoderm formation and differentiation. This is Mesogenin-1 (msgn1) from Danio rerio (Zebrafish).